We begin with the raw amino-acid sequence, 448 residues long: Exodeoxyribonuclease 7 large subunit (448 aa).

Belongs to the XseA family. Heterooligomer composed of large and small subunits.

Its subcellular location is the cytoplasm. It catalyses the reaction Exonucleolytic cleavage in either 5'- to 3'- or 3'- to 5'-direction to yield nucleoside 5'-phosphates.. Functionally, bidirectionally degrades single-stranded DNA into large acid-insoluble oligonucleotides, which are then degraded further into small acid-soluble oligonucleotides. The polypeptide is Exodeoxyribonuclease 7 large subunit (Nitrosomonas europaea (strain ATCC 19718 / CIP 103999 / KCTC 2705 / NBRC 14298)).